A 138-amino-acid polypeptide reads, in one-letter code: Basic phospholipase A2 homolog Tbo-K49 (138 aa).

The first 16 residues, 1–16 (MRTLWIMAVLLVGVEG), serve as a signal peptide directing secretion. Intrachain disulfides connect C42–C131, C44–C60, C59–C111, C65–C138, C66–C104, and C91–C102. Positions 121 to 133 (KKERINTKIFCKK) are important for membrane-damaging activities in eukaryotes and bacteria; heparin-binding.

Monomer. In terms of tissue distribution, expressed by the venom gland.

The protein localises to the secreted. Snake venom phospholipase A2 homolog that lacks catalytic activity. It induces local edema. Is myotoxic. A model of myotoxic mechanism has been proposed: an apo Lys49-PLA2 is activated by the entrance of a hydrophobic molecule (e.g. fatty acid) at the hydrophobic channel of the protein leading to a reorientation of a monomer. This reorientation causes a transition between 'inactive' to 'active' states, causing alignment of C-terminal and membrane-docking sites (MDoS) side-by-side and putting the membrane-disruption sites (MDiS) in the same plane, exposed to solvent and in a symmetric position for both monomers. The MDoS region stabilizes the toxin on membrane by the interaction of charged residues with phospholipid head groups. Subsequently, the MDiS region destabilizes the membrane with penetration of hydrophobic residues. This insertion causes a disorganization of the membrane, allowing an uncontrolled influx of ions (i.e. calcium and sodium), and eventually triggering irreversible intracellular alterations and cell death. In Craspedocephalus borneensis (Borneo pit viper), this protein is Basic phospholipase A2 homolog Tbo-K49.